Reading from the N-terminus, the 430-residue chain is Serine/threonine transporter SstT (430 aa).

Transmembrane regions (helical) follow at residues isoleucine 24–isoleucine 44, phenylalanine 47–valine 67, phenylalanine 82–leucine 102, alanine 144–methionine 164, valine 186–valine 206, leucine 223–phenylalanine 243, isoleucine 294–methionine 314, leucine 320–alanine 340, and phenylalanine 361–isoleucine 381.

The protein belongs to the dicarboxylate/amino acid:cation symporter (DAACS) (TC 2.A.23) family.

Its subcellular location is the cell membrane. The enzyme catalyses L-serine(in) + Na(+)(in) = L-serine(out) + Na(+)(out). It carries out the reaction L-threonine(in) + Na(+)(in) = L-threonine(out) + Na(+)(out). Its function is as follows. Involved in the import of serine and threonine into the cell, with the concomitant import of sodium (symport system). In Bifidobacterium adolescentis (strain ATCC 15703 / DSM 20083 / NCTC 11814 / E194a), this protein is Serine/threonine transporter SstT.